A 168-amino-acid chain; its full sequence is Small ribosomal subunit protein uS5c (168 aa).

An S5 DRBM domain is found at 17–80; sequence WQERVVQIRR…SDGKKKIVSV (64 aa).

Belongs to the universal ribosomal protein uS5 family. As to quaternary structure, part of the 30S ribosomal subunit. Contacts protein S4.

It localises to the plastid. The protein resides in the chloroplast. With S4 and S12 plays an important role in translational accuracy. In Rhodomonas salina (Cryptomonas salina), this protein is Small ribosomal subunit protein uS5c (rps5).